Here is a 303-residue protein sequence, read N- to C-terminus: Probable cell division protein WhiA (303 aa).

The H-T-H motif DNA-binding region spans serine 272–leucine 303.

This sequence belongs to the WhiA family.

Involved in cell division and chromosome segregation. This chain is Probable cell division protein WhiA, found in Streptococcus pneumoniae serotype 2 (strain D39 / NCTC 7466).